A 405-amino-acid chain; its full sequence is Phosphoglycerate kinase (405 aa).

Substrate contacts are provided by residues Asp-23–Asn-25, Arg-39, His-62–Arg-65, Arg-121, and Arg-154. Residues Lys-207, Gly-298, Glu-329, and Gly-355–Thr-358 contribute to the ATP site.

It belongs to the phosphoglycerate kinase family. As to quaternary structure, monomer.

It localises to the cytoplasm. The enzyme catalyses (2R)-3-phosphoglycerate + ATP = (2R)-3-phospho-glyceroyl phosphate + ADP. The protein operates within carbohydrate degradation; glycolysis; pyruvate from D-glyceraldehyde 3-phosphate: step 2/5. In Campylobacter hominis (strain ATCC BAA-381 / DSM 21671 / CCUG 45161 / LMG 19568 / NCTC 13146 / CH001A), this protein is Phosphoglycerate kinase.